Here is a 141-residue protein sequence, read N- to C-terminus: Hemoglobin subunit alpha-A (141 aa).

In terms of domain architecture, Globin spans 1-141; it reads VLSASDKANV…VGTVLTAKYR (141 aa). His58 is a binding site for O2. His87 is a binding site for heme b.

This sequence belongs to the globin family. As to quaternary structure, heterotetramer of two alpha chains and two beta chains. As to expression, red blood cells.

Involved in oxygen transport from the lung to the various peripheral tissues. This is Hemoglobin subunit alpha-A (HBAA) from Sturnus vulgaris (Starling).